A 401-amino-acid chain; its full sequence is MMTFQTLDDLDDGQRVLVRLDLNSPVEDGTVQDNRRFDRHAETVKELADRGFEVAVLAHQGRPGRDDFVSLDQHADILADHIDRDVDFVDETYGPQAIHDIADLDSGDVLVLENTRMCDDELPEEDPEVKAQTEFVKTLAGEFDAYINDAYSAAHRSHASLVGFPLVMDAYAGRVMETEYEANTAIAEKEFDGQVTMVVGGTKATDVIDVMTHLDEKVDDFLLGGIAGTVPAAAGHPVGYDIDDANLYDEQWEANSEKIESMLEDHRDQITLAVDLAYEDENDDRAEQAVDDIDEKRLSYLDVGSETLMEYSPIIRESEAVFGEGRAGMFEDERFSVGTAGVLEAIADTDCFSVVGGGDTSRAIEMYGMEEDEFGHVSIAGGAYIRALTRAQLVGVEVLQR.

Substrate-binding positions include 21–23, Arg36, 59–62, Arg116, and Arg156; these read DLN and HQGR. Residues Glu331 and 357-360 each bind ATP; that span reads GGDT.

Belongs to the phosphoglycerate kinase family.

It is found in the cytoplasm. The catalysed reaction is (2R)-3-phosphoglycerate + ATP = (2R)-3-phospho-glyceroyl phosphate + ADP. Its pathway is carbohydrate degradation; glycolysis; pyruvate from D-glyceraldehyde 3-phosphate: step 2/5. This Haloarcula vallismortis (Halobacterium vallismortis) protein is Phosphoglycerate kinase (pgk).